Here is a 330-residue protein sequence, read N- to C-terminus: L-asparaginase (330 aa).

The region spanning 4–330 (PQVTILATGG…EAIQKIFSTY (327 aa)) is the Asparaginase/glutaminase domain. Residue Thr-14 is the O-isoaspartyl threonine intermediate of the active site. Position 93–94 (93–94 (TD)) interacts with substrate.

The protein belongs to the asparaginase 1 family. Homotetramer.

The protein localises to the cytoplasm. The catalysed reaction is L-asparagine + H2O = L-aspartate + NH4(+). The polypeptide is L-asparaginase (ansA) (Wolinella succinogenes (strain ATCC 29543 / DSM 1740 / CCUG 13145 / JCM 31913 / LMG 7466 / NCTC 11488 / FDC 602W) (Vibrio succinogenes)).